Consider the following 164-residue polypeptide: V-type proton ATPase 16 kDa proteolipid subunit (164 aa).

Residues 1-10 (MSDLCPPTAP) are Lumenal-facing. Residues 11-31 (FFGFMGAAVALIFANLGAAYG) traverse the membrane as a helical segment. At 32–53 (TAKSGVGVSSMGVMKPDLVMKS) the chain is on the cytoplasmic side. Residues 54–74 (IIPVVMAGVLGIYGLIIAVII) traverse the membrane as a helical segment. At 75-96 (GNGVKGPEGGKPQYSSFTGFAH) the chain is on the lumenal side. A helical transmembrane segment spans residues 97-118 (LAAGLACGLSGMAAGIAIGIVG). At 119-130 (DAGVRASAQQAK) the chain is on the cytoplasmic side. A helical membrane pass occupies residues 131–155 (LYVGMVLILIFAEALGLYGLIVGLI). Topologically, residues 156 to 164 (LTSKEAPCS) are lumenal.

It belongs to the V-ATPase proteolipid subunit family. As to quaternary structure, V-ATPase is a heteromultimeric enzyme composed of a peripheral catalytic V1 complex (main components: subunits A, B, C, D, E, and F) attached to an integral membrane V0 proton pore complex (main component: the proteolipid protein; which is present as a hexamer that forms the proton-conducting pore).

Its subcellular location is the vacuole membrane. Proton-conducting pore forming subunit of the membrane integral V0 complex of vacuolar ATPase. V-ATPase is responsible for acidifying a variety of intracellular compartments in eukaryotic cells. The sequence is that of V-type proton ATPase 16 kDa proteolipid subunit (VAP) from Chrysotila carterae (Marine alga).